The sequence spans 418 residues: FXa-directed anticoagulant (418 aa).

The first 19 residues, 1–19 (MNLKIAIIVICQLVYFTQG), serve as a signal peptide directing secretion. N117, N167, and N286 each carry an N-linked (GlcNAc...) asparagine glycan.

It belongs to the serpin family. Interacts with host coagulation factor X/F10 (activated). As to expression, female salivary gland (at protein level).

The protein resides in the secreted. Its function is as follows. Anticoagulant and antithrombotic serpin-type protein inhibiting host coagulation factor Xa (F10). Does not inhibit host uPA/urokinase-type plasminogen activator (PLAU), kallikrein, granzyme B (GZMB), matriptase, elastase, alpha-chymotrypsin, chymase, coagulation factor XIIa (F12), coagulation factor XIa (F11), plasmin (PLG), thrombin (F2), trypsin and cathepsin G (CTSG). Inhibits factor Xa-induced production of pro-inflammatory cytokines, such as MCP-1/CCL2, TNF-alpha/TNF, IL-1beta/IL1B, IL6, IL8/CXCL8 and IL18, in human endothelial cells. Inhibits factor Xa-induced up-regulation of protease-activated receptors (PARs) F2R, F2RL1 and F2RL2 in human endothelial cells. Prevents activation of host F2RL1 via inhibition of F2RL1 cleavage by host factor Xa. Inhibits factor Xa-induced up-regulation of adhesion molecules ICAM1 and VCAM1 in human endothelial cells. Inhibits factor Xa-induced up-regulation of phosphorylated ERK1/2 in human endothelial cells. Inhibits factor Xa-induced activation of transcription factor NF-kappa-B in human endothelial cells. Reduces factor Xa-induced edema in the host. Reduces factor Xa-induced endothelial permeability in the host. This Aedes albopictus (Asian tiger mosquito) protein is FXa-directed anticoagulant.